The chain runs to 518 residues: Cytochrome P450 736A117 (518 aa).

N-linked (GlcNAc...) asparagine glycosylation is present at Asn12. A helical transmembrane segment spans residues 17–37; that stretch reads FLQPLAFTLLAIFLVLLYTWY. 3 N-linked (GlcNAc...) asparagine glycosylation sites follow: Asn185, Asn275, and Asn356. Cys460 contributes to the heme binding site.

This sequence belongs to the cytochrome P450 family. Heme serves as cofactor. As to expression, expressed at similar levels in fruit kernel, seedlings, leaves, stems and buds.

It is found in the membrane. The polypeptide is Cytochrome P450 736A117 (Prunus mume (Japanese apricot)).